Here is a 354-residue protein sequence, read N- to C-terminus: UDP-N-acetylglucosamine--N-acetylmuramyl-(pentapeptide) pyrophosphoryl-undecaprenol N-acetylglucosamine transferase (354 aa).

Residues 15–17 (TGG), N127, R163, S191, I244, 263–268 (ALTVSE), and Q288 contribute to the UDP-N-acetyl-alpha-D-glucosamine site.

This sequence belongs to the glycosyltransferase 28 family. MurG subfamily.

The protein localises to the cell inner membrane. The catalysed reaction is di-trans,octa-cis-undecaprenyl diphospho-N-acetyl-alpha-D-muramoyl-L-alanyl-D-glutamyl-meso-2,6-diaminopimeloyl-D-alanyl-D-alanine + UDP-N-acetyl-alpha-D-glucosamine = di-trans,octa-cis-undecaprenyl diphospho-[N-acetyl-alpha-D-glucosaminyl-(1-&gt;4)]-N-acetyl-alpha-D-muramoyl-L-alanyl-D-glutamyl-meso-2,6-diaminopimeloyl-D-alanyl-D-alanine + UDP + H(+). It functions in the pathway cell wall biogenesis; peptidoglycan biosynthesis. Functionally, cell wall formation. Catalyzes the transfer of a GlcNAc subunit on undecaprenyl-pyrophosphoryl-MurNAc-pentapeptide (lipid intermediate I) to form undecaprenyl-pyrophosphoryl-MurNAc-(pentapeptide)GlcNAc (lipid intermediate II). This chain is UDP-N-acetylglucosamine--N-acetylmuramyl-(pentapeptide) pyrophosphoryl-undecaprenol N-acetylglucosamine transferase, found in Aliivibrio fischeri (strain MJ11) (Vibrio fischeri).